A 210-amino-acid polypeptide reads, in one-letter code: Protein GET1 (210 aa).

The Lumenal segment spans residues 1–4 (MPSL). Residues 5–24 (LIIVLIIHVVTYLINTIGAN) traverse the membrane as a helical segment. At 25–110 (TIDSLLWLLY…SFDLAVKSVR (86 aa)) the chain is on the cytoplasmic side. The stretch at 39 to 95 (NQTSQTADEQRRLKREVMQLKREMNATSSQDEFAKWAKLRRRHDKTMEEYEAKNKAL) forms a coiled coil. Residues 111 to 131 (FFSTTGLKLFLQFWFSKTPIF) form a helical membrane-spanning segment. Residues 132-155 (ELPRGWIPWQVEWVLSFPRAPLGT) lie on the Lumenal side of the membrane. A helical membrane pass occupies residues 156-172 (VSIQIWGGVCATVVSLA). The Cytoplasmic portion of the chain corresponds to 173–210 (GDAIGVVNVYLTSKAPKQKEPATSGENSARPMAIKKEL). Residues 189–210 (KQKEPATSGENSARPMAIKKEL) form a disordered region.

This sequence belongs to the WRB/GET1 family. In terms of assembly, interacts with GET3.

The protein localises to the endoplasmic reticulum membrane. Its function is as follows. Required for the post-translational delivery of tail-anchored (TA) proteins to the endoplasmic reticulum. Acts as a membrane receptor for soluble GET3, which recognizes and selectively binds the transmembrane domain of TA proteins in the cytosol. The protein is Protein GET1 of Coccidioides posadasii (strain C735) (Valley fever fungus).